The primary structure comprises 140 residues: Protein E6 (140 aa).

Zinc fingers lie at residues 27–63 (CIFCSHTVDLADLALFYLKKLSLVFRGNCYYACCSEC) and 100–136 (CICCLRLLDIVEKLDLLYSDETCYLIRGLWRGYCRNC).

It belongs to the papillomaviridae E6 protein family. Forms homodimers. Interacts with ubiquitin-protein ligase UBE3A/E6-AP; this interaction stimulates UBE3A ubiquitin activity. Interacts with host BAK1.

The protein localises to the host cytoplasm. The protein resides in the host nucleus. Plays a major role in the induction and maintenance of cellular transformation. E6 associates with host UBE3A/E6-AP ubiquitin-protein ligase and modulates its activity. Protects host keratinocytes from apoptosis by mediating the degradation of host BAK1. May also inhibit host immune response. This Human papillomavirus 4 protein is Protein E6.